A 405-amino-acid chain; its full sequence is Beta-citrylglutamate synthase B (405 aa).

One can recognise an ATP-grasp domain in the interval 115–300; it reads FQELAGHGVP…VAGIVADFVL (186 aa). Residues lysine 154, 189–199, and arginine 215 each bind ATP; that span reads QEYVKESHGRD. Residues aspartate 260, glutamate 273, and asparagine 275 each contribute to the Mg(2+) site. 3 residues coordinate Mn(2+): aspartate 260, glutamate 273, and asparagine 275. The segment at 359 to 387 is disordered; the sequence is AMSTMSTSSTSSESEADLTETGPTPVGAN. Positions 360 to 371 are enriched in low complexity; that stretch reads MSTMSTSSTSSE.

It belongs to the RimK family. Mg(2+) is required as a cofactor. It depends on Mn(2+) as a cofactor.

It is found in the cytoplasm. It carries out the reaction citrate + L-glutamate + ATP = beta-citrylglutamate + ADP + phosphate + H(+). The enzyme catalyses N-acetyl-L-aspartate + L-glutamate + ATP = N-acetyl-L-aspartyl-L-glutamate + ADP + phosphate + H(+). Catalyzes the synthesis of beta-citryl-L-glutamate and N-acetyl-L-aspartyl-L-glutamate. Beta-citryl-L-glutamate is synthesized more efficiently than N-acetyl-L-aspartyl-L-glutamate. This Danio rerio (Zebrafish) protein is Beta-citrylglutamate synthase B (rimklb).